Consider the following 875-residue polypeptide: Leucine--tRNA ligase (875 aa).

The short motif at 43–53 is the 'HIGH' region element; the sequence is PYPSGRIHMGH. A 'KMSKS' region motif is present at residues 633–637; sequence KMSKS. Lys-636 is a binding site for ATP.

The protein belongs to the class-I aminoacyl-tRNA synthetase family.

The protein localises to the cytoplasm. The catalysed reaction is tRNA(Leu) + L-leucine + ATP = L-leucyl-tRNA(Leu) + AMP + diphosphate. The polypeptide is Leucine--tRNA ligase (Bartonella bacilliformis (strain ATCC 35685 / KC583 / Herrer 020/F12,63)).